The following is a 163-amino-acid chain: Glutathione peroxidase 2 (163 aa).

The active site involves C36.

The protein belongs to the glutathione peroxidase family.

The protein localises to the cytoplasm. The enzyme catalyses 2 glutathione + H2O2 = glutathione disulfide + 2 H2O. May constitute a glutathione peroxidase-like protective system against oxidative stresses. This is Glutathione peroxidase 2 (gpx-2) from Caenorhabditis elegans.